A 377-amino-acid chain; its full sequence is DNA replication and repair protein RecF (377 aa).

30 to 37 (GPNGQGKT) lines the ATP pocket.

It belongs to the RecF family.

The protein localises to the cytoplasm. In terms of biological role, the RecF protein is involved in DNA metabolism; it is required for DNA replication and normal SOS inducibility. RecF binds preferentially to single-stranded, linear DNA. It also seems to bind ATP. The protein is DNA replication and repair protein RecF of Thermobifida fusca (strain YX).